An 83-amino-acid chain; its full sequence is Large ribosomal subunit protein uL23 (83 aa).

It belongs to the universal ribosomal protein uL23 family. Part of the 50S ribosomal subunit. Contacts protein L29.

Binds to 23S rRNA. One of the proteins that surrounds the polypeptide exit tunnel on the outside of the ribosome. The protein is Large ribosomal subunit protein uL23 of Archaeoglobus fulgidus (strain ATCC 49558 / DSM 4304 / JCM 9628 / NBRC 100126 / VC-16).